Here is a 382-residue protein sequence, read N- to C-terminus: Alanine racemase 1 (382 aa).

Residue Lys-39 is the Proton acceptor; specific for D-alanine of the active site. Lys-39 bears the N6-(pyridoxal phosphate)lysine mark. Arg-138 is a binding site for substrate. Tyr-265 functions as the Proton acceptor; specific for L-alanine in the catalytic mechanism. Met-312 is a binding site for substrate.

It belongs to the alanine racemase family. It depends on pyridoxal 5'-phosphate as a cofactor.

The enzyme catalyses L-alanine = D-alanine. The protein operates within amino-acid biosynthesis; D-alanine biosynthesis; D-alanine from L-alanine: step 1/1. Its function is as follows. Catalyzes the interconversion of L-alanine and D-alanine. May also act on other amino acids. This chain is Alanine racemase 1 (alr1), found in Staphylococcus aureus (strain MRSA252).